The primary structure comprises 619 residues: Dihydroxy-acid dehydratase (619 aa).

Asp80 lines the Mg(2+) pocket. Cys121 is a binding site for [2Fe-2S] cluster. 2 residues coordinate Mg(2+): Asp122 and Lys123. The residue at position 123 (Lys123) is an N6-carboxylysine. Residue Cys196 coordinates [2Fe-2S] cluster. Glu492 is a Mg(2+) binding site. The Proton acceptor role is filled by Ser518.

It belongs to the IlvD/Edd family. As to quaternary structure, homodimer. It depends on [2Fe-2S] cluster as a cofactor. Mg(2+) serves as cofactor.

The catalysed reaction is (2R)-2,3-dihydroxy-3-methylbutanoate = 3-methyl-2-oxobutanoate + H2O. It carries out the reaction (2R,3R)-2,3-dihydroxy-3-methylpentanoate = (S)-3-methyl-2-oxopentanoate + H2O. It functions in the pathway amino-acid biosynthesis; L-isoleucine biosynthesis; L-isoleucine from 2-oxobutanoate: step 3/4. It participates in amino-acid biosynthesis; L-valine biosynthesis; L-valine from pyruvate: step 3/4. In terms of biological role, functions in the biosynthesis of branched-chain amino acids. Catalyzes the dehydration of (2R,3R)-2,3-dihydroxy-3-methylpentanoate (2,3-dihydroxy-3-methylvalerate) into 2-oxo-3-methylpentanoate (2-oxo-3-methylvalerate) and of (2R)-2,3-dihydroxy-3-methylbutanoate (2,3-dihydroxyisovalerate) into 2-oxo-3-methylbutanoate (2-oxoisovalerate), the penultimate precursor to L-isoleucine and L-valine, respectively. The sequence is that of Dihydroxy-acid dehydratase from Bifidobacterium adolescentis (strain ATCC 15703 / DSM 20083 / NCTC 11814 / E194a).